Here is a 505-residue protein sequence, read N- to C-terminus: Band 7 protein CG42540 (505 aa).

The disordered stretch occupies residues 1-164; sequence MPDSMMDMEH…IHRAEARRAD (164 aa). Residues 47–60 show a composition bias toward basic and acidic residues; that stretch reads SEERDRDRDRERDH. Composition is skewed to low complexity over residues 82–104 and 113–139; these read QLHQQQPQQQQQQQPLTQLQQPQ and QQQQQQQQMMQQPQQQQQMQQPQQQLP. The chain crosses the membrane as a helical span at residues 178-198; it reads LIFLSVALVIMTLPFSLFVCF. Residues 443–505 are disordered; that stretch reads GNTPPPLQLA…QQGQQISSAM (63 aa). The segment covering 451–505 has biased composition (low complexity); the sequence is LAPQQQMGQQQQPQYQQPQQQQQQYQPQQQQQQQQQQPQQQDQLYQQGQQISSAM.

This sequence belongs to the band 7/mec-2 family.

The protein localises to the membrane. The protein is Band 7 protein CG42540 of Drosophila melanogaster (Fruit fly).